Reading from the N-terminus, the 123-residue chain is Ribosome-binding factor A (123 aa).

This sequence belongs to the RbfA family. As to quaternary structure, monomer. Binds 30S ribosomal subunits, but not 50S ribosomal subunits or 70S ribosomes.

The protein localises to the cytoplasm. Functionally, one of several proteins that assist in the late maturation steps of the functional core of the 30S ribosomal subunit. Associates with free 30S ribosomal subunits (but not with 30S subunits that are part of 70S ribosomes or polysomes). Required for efficient processing of 16S rRNA. May interact with the 5'-terminal helix region of 16S rRNA. This is Ribosome-binding factor A from Chlorobium chlorochromatii (strain CaD3).